The sequence spans 405 residues: Protochlorophyllide reductase A, chloroplastic (405 aa).

The transit peptide at 1 to 69 (MALQAASLVS…LRNNKAIIRA (69 aa)) directs the protein to the chloroplast.

The protein belongs to the short-chain dehydrogenases/reductases (SDR) family. POR subfamily. Forms large complexes including TOC33, pPORA and OEP161 during pPORA import into plastids at the plastid envelope membrane. Interacts with CPP1 during plastid import. In terms of tissue distribution, expressed in young seedlings. Not detected in leaves.

It is found in the plastid. Its subcellular location is the chloroplast. It carries out the reaction chlorophyllide a + NADP(+) = protochlorophyllide a + NADPH + H(+). Its pathway is porphyrin-containing compound metabolism; chlorophyll biosynthesis. Phototransformation of protochlorophyllide (Pchlide) to chlorophyllide (Chlide). PORA may also function as a photoprotectant during the transitory stage from dark to light. Functions in skotomorphogenesis, photomorphogenesis and throughout the plant life under specific light conditions. In Arabidopsis thaliana (Mouse-ear cress), this protein is Protochlorophyllide reductase A, chloroplastic (PORA).